The primary structure comprises 353 residues: Probable dual-specificity RNA methyltransferase RlmN (353 aa).

The Proton acceptor role is filled by Glu104. A Radical SAM core domain is found at 112–341; it reads DGGRKTICIS…ILNRRSPGKD (230 aa). A disulfide bond links Cys119 and Cys346. Positions 126, 130, and 133 each coordinate [4Fe-4S] cluster. Residues 173–174, Ser205, 228–230, and Asn304 contribute to the S-adenosyl-L-methionine site; these read GE and SLN. Cys346 functions as the S-methylcysteine intermediate in the catalytic mechanism.

The protein belongs to the radical SAM superfamily. RlmN family. [4Fe-4S] cluster serves as cofactor.

It localises to the cytoplasm. It catalyses the reaction adenosine(2503) in 23S rRNA + 2 reduced [2Fe-2S]-[ferredoxin] + 2 S-adenosyl-L-methionine = 2-methyladenosine(2503) in 23S rRNA + 5'-deoxyadenosine + L-methionine + 2 oxidized [2Fe-2S]-[ferredoxin] + S-adenosyl-L-homocysteine. The catalysed reaction is adenosine(37) in tRNA + 2 reduced [2Fe-2S]-[ferredoxin] + 2 S-adenosyl-L-methionine = 2-methyladenosine(37) in tRNA + 5'-deoxyadenosine + L-methionine + 2 oxidized [2Fe-2S]-[ferredoxin] + S-adenosyl-L-homocysteine. Specifically methylates position 2 of adenine 2503 in 23S rRNA and position 2 of adenine 37 in tRNAs. In Leptospira interrogans serogroup Icterohaemorrhagiae serovar Lai (strain 56601), this protein is Probable dual-specificity RNA methyltransferase RlmN.